The primary structure comprises 799 residues: Protein ADP-ribosyltransferase PARP3 (799 aa).

Residues 1–49 are compositionally biased toward basic and acidic residues; it reads MKVESRSHNVHHAHGEEEKVMTRKQKAESKAHEVEHSPKKAKVEDEKNG. Residues 1–55 are disordered; it reads MKVESRSHNVHHAHGEEEKVMTRKQKAESKAHEVEHSPKKAKVEDEKNGHTNGKS. Positions 39 to 188 constitute a PADR1 zinc-binding domain; it reads KKAKVEDEKN…QRDLGLAIKP (150 aa). Residues 71–105 enclose the SAP domain; sequence NEQLSLEQMKEILEANDLDSSGSDLEITRRCQDLL. The tract at residues 108–152 is zinc ribbon; sequence GALEKCMVCNGNMEFDGRRYGCRGFYSEWSSCTFSTREPPRKDEP. Residues Cys-113, Cys-116, Cys-129, and Cys-139 each contribute to the Zn(2+) site. Positions 140–161 are disordered; the sequence is TFSTREPPRKDEPIKLPDSVQN. A compositionally biased stretch (basic and acidic residues) spans 145 to 154; that stretch reads EPPRKDEPIK. Residues 189-261 form the BRCT domain; the sequence is FTGMMISLMG…EPQPLESYDL (73 aa). The WGR domain occupies 309–409; the sequence is DGKIFEKDGI…KKFQKKPLKF (101 aa). Positions 436-555 constitute a PARP alpha-helical domain; it reads HCKLEPMVAN…DITLASHLIG (120 aa). Residues 564 to 795 form the PARP catalytic domain; the sequence is DPLSDTYKKL…VKYEEKDAVI (232 aa).

The protein belongs to the ARTD/PARP family.

It localises to the nucleus. It carries out the reaction L-aspartyl-[protein] + NAD(+) = 4-O-(ADP-D-ribosyl)-L-aspartyl-[protein] + nicotinamide. It catalyses the reaction L-glutamyl-[protein] + NAD(+) = 5-O-(ADP-D-ribosyl)-L-glutamyl-[protein] + nicotinamide. Involved in the base excision repair (BER) pathway, by catalyzing the poly(ADP-ribosyl)ation of a limited number of acceptor proteins involved in chromatin architecture and in DNA metabolism. This modification follows DNA damages and appears as an obligatory step in a detection/signaling pathway leading to the reparation of DNA strand breaks. In Medicago truncatula (Barrel medic), this protein is Protein ADP-ribosyltransferase PARP3 (PARP3).